A 422-amino-acid polypeptide reads, in one-letter code: UDP-N-acetylmuramoylalanine--D-glutamate ligase (422 aa).

Position 102 to 108 (102 to 108 (GTNGKTT)) interacts with ATP.

It belongs to the MurCDEF family.

Its subcellular location is the cytoplasm. It catalyses the reaction UDP-N-acetyl-alpha-D-muramoyl-L-alanine + D-glutamate + ATP = UDP-N-acetyl-alpha-D-muramoyl-L-alanyl-D-glutamate + ADP + phosphate + H(+). Its pathway is cell wall biogenesis; peptidoglycan biosynthesis. Functionally, cell wall formation. Catalyzes the addition of glutamate to the nucleotide precursor UDP-N-acetylmuramoyl-L-alanine (UMA). The sequence is that of UDP-N-acetylmuramoylalanine--D-glutamate ligase from Helicobacter pylori (strain J99 / ATCC 700824) (Campylobacter pylori J99).